The chain runs to 88 residues: U13-theraphotoxin-Cg1a (88 aa).

The N-terminal stretch at 1 to 21 (MKVSVLITLAVLGVMFVWASA) is a signal peptide. Positions 22-52 (AELEQSGSDQKDSDSPAWLKSMERIFQSEER) are excised as a propeptide. Intrachain disulfides connect Cys-54-Cys-68, Cys-61-Cys-73, and Cys-67-Cys-80.

The protein belongs to the neurotoxin 10 (Hwtx-1) family. 41 (Jztx-36) subfamily. In terms of tissue distribution, expressed by the venom gland.

It localises to the secreted. Functionally, probable ion channel inhibitor. The sequence is that of U13-theraphotoxin-Cg1a from Chilobrachys guangxiensis (Chinese earth tiger tarantula).